A 173-amino-acid chain; its full sequence is Photosystem I assembly protein Ycf3 (173 aa).

TPR repeat units lie at residues Ala-35–Lys-68, Gly-72–Gln-105, and Gly-120–Gly-153.

This sequence belongs to the Ycf3 family.

Its subcellular location is the cellular thylakoid membrane. Essential for the assembly of the photosystem I (PSI) complex. May act as a chaperone-like factor to guide the assembly of the PSI subunits. This Prochlorococcus marinus (strain MIT 9312) protein is Photosystem I assembly protein Ycf3.